Here is a 1238-residue protein sequence, read N- to C-terminus: Erythroid differentiation-related factor 1 (1238 aa).

Disordered stretches follow at residues 1–38 (MGDA…AQGS), 220–268 (QPVS…GSEP), 517–561 (PKKE…SDDS), and 620–647 (KKES…RGGP). 3 stretches are compositionally biased toward low complexity: residues 9–38 (AEGP…AQGS), 223–241 (SSTA…NDSE), and 253–263 (SSVSEDPSASS). The span at 530–547 (NSDESYSEEEEEMPDSDE) shows a compositional bias: acidic residues. TPR repeat units lie at residues 693-726 (SKAY…HDTY) and 914-953 (AQAH…LGTR).

The protein localises to the nucleus. Transcription factor involved in erythroid differentiation. Involved in transcriptional activation of the globin gene. This chain is Erythroid differentiation-related factor 1 (EDRF1), found in Homo sapiens (Human).